Here is a 260-residue protein sequence, read N- to C-terminus: MRTDTDKLIIAGREFNSRLMVGTGKYADFQQMVKAIEVSGAEIITVAVRRVNISDRNKESLLDHIDTKKYTLLPNTAGCYTADDAIRTCRLAREAGLSDFVKLEVLGDEKTLFPDNEELLKAAKVLIKEGFTVLPYTTDDPIVCKKLEDIGCAAVMPLGAPIGSGLGIRNPYNIRIILDTVKVPVIVDAGVGTASDAAIAMELGCHGVLMNTGIAGAKDPIAMAEAMNLAVRAGRLAYRAGRIPKKLYATASSPVEGTIE.

Catalysis depends on Lys-102, which acts as the Schiff-base intermediate with DXP. Residues Gly-163, 189 to 190 (AG), and 211 to 212 (NT) each bind 1-deoxy-D-xylulose 5-phosphate.

It belongs to the ThiG family. In terms of assembly, homotetramer. Forms heterodimers with either ThiH or ThiS.

Its subcellular location is the cytoplasm. The catalysed reaction is [ThiS sulfur-carrier protein]-C-terminal-Gly-aminoethanethioate + 2-iminoacetate + 1-deoxy-D-xylulose 5-phosphate = [ThiS sulfur-carrier protein]-C-terminal Gly-Gly + 2-[(2R,5Z)-2-carboxy-4-methylthiazol-5(2H)-ylidene]ethyl phosphate + 2 H2O + H(+). It participates in cofactor biosynthesis; thiamine diphosphate biosynthesis. Functionally, catalyzes the rearrangement of 1-deoxy-D-xylulose 5-phosphate (DXP) to produce the thiazole phosphate moiety of thiamine. Sulfur is provided by the thiocarboxylate moiety of the carrier protein ThiS. In vitro, sulfur can be provided by H(2)S. The chain is Thiazole synthase from Geotalea uraniireducens (strain Rf4) (Geobacter uraniireducens).